The primary structure comprises 306 residues: Methionyl-tRNA formyltransferase (306 aa).

108–111 (SLLP) serves as a coordination point for (6S)-5,6,7,8-tetrahydrofolate.

This sequence belongs to the Fmt family.

The catalysed reaction is L-methionyl-tRNA(fMet) + (6R)-10-formyltetrahydrofolate = N-formyl-L-methionyl-tRNA(fMet) + (6S)-5,6,7,8-tetrahydrofolate + H(+). In terms of biological role, attaches a formyl group to the free amino group of methionyl-tRNA(fMet). The formyl group appears to play a dual role in the initiator identity of N-formylmethionyl-tRNA by promoting its recognition by IF2 and preventing the misappropriation of this tRNA by the elongation apparatus. The protein is Methionyl-tRNA formyltransferase of Paenarthrobacter aurescens (strain TC1).